Consider the following 139-residue polypeptide: Ribonuclease P protein component (139 aa).

Belongs to the RnpA family. Consists of a catalytic RNA component (M1 or rnpB) and a protein subunit.

It carries out the reaction Endonucleolytic cleavage of RNA, removing 5'-extranucleotides from tRNA precursor.. RNaseP catalyzes the removal of the 5'-leader sequence from pre-tRNA to produce the mature 5'-terminus. It can also cleave other RNA substrates such as 4.5S RNA. The protein component plays an auxiliary but essential role in vivo by binding to the 5'-leader sequence and broadening the substrate specificity of the ribozyme. This is Ribonuclease P protein component from Chlamydia felis (strain Fe/C-56) (Chlamydophila felis).